The sequence spans 430 residues: Adenylosuccinate synthetase (430 aa).

GTP contacts are provided by residues 12 to 18 (GDEGKGK) and 40 to 42 (GHT). Asp-13 serves as the catalytic Proton acceptor. The Mg(2+) site is built by Asp-13 and Gly-40. Residues 13-16 (DEGK), 38-41 (NAGH), Thr-128, Arg-142, Gln-223, Thr-238, and Arg-302 each bind IMP. His-41 (proton donor) is an active-site residue. 298–304 (VNTGRTR) contacts substrate. Residues Arg-304, 330 to 332 (KLD), and 412 to 414 (GVG) each bind GTP.

This sequence belongs to the adenylosuccinate synthetase family. In terms of assembly, homodimer. Mg(2+) is required as a cofactor.

It localises to the cytoplasm. It carries out the reaction IMP + L-aspartate + GTP = N(6)-(1,2-dicarboxyethyl)-AMP + GDP + phosphate + 2 H(+). It functions in the pathway purine metabolism; AMP biosynthesis via de novo pathway; AMP from IMP: step 1/2. Plays an important role in the de novo pathway of purine nucleotide biosynthesis. Catalyzes the first committed step in the biosynthesis of AMP from IMP. The polypeptide is Adenylosuccinate synthetase (Corynebacterium ammoniagenes (Brevibacterium ammoniagenes)).